Consider the following 614-residue polypeptide: Vitamin B12 transporter BtuB (614 aa).

Residues Met1 to Ala20 form the signal peptide. A TonB box motif is present at residues Asp26–Asn33. The region spanning Pro38–Thr152 is the TBDR plug domain. Residues Leu83, Ser85, Asn92, and Val110 to Ser111 each bind cyanocob(III)alamin. A TBDR beta-barrel domain is found at His155 to Phe614. The next 3 membrane-spanning stretches (beta stranded) occupy residues Thr158 to Gly165, Tyr169 to Gln178, and Thr184 to Thr195. Ca(2+) contacts are provided by Asp199, Gln211, Asp213, and Asp215. The next 2 membrane-spanning stretches (beta stranded) occupy residues Phe217–Glu227 and Asp232–Asn248. Residues Tyr249 and Asp250 each coordinate Ca(2+). Residue Ala251 coordinates cyanocob(III)alamin. Asp261 is a binding site for Ca(2+). 14 consecutive transmembrane segments (beta stranded) span residues Arg263–Asn277, Glu279–Asn296, Thr309–Ile325, His328–Trp337, Tyr353–Gly369, Phe371–Asp381, Phe385–Ile400, Tyr403–Asn417, Lys434–Glu443, Val449–Asn458, Tyr473–Phe490, Pro494–Ala509, Arg517–Trp529, and Asp535–Asp550. Thr309 is a binding site for cyanocob(III)alamin. Arg517 serves as a coordination point for cyanocob(III)alamin. Cyanocob(III)alamin is bound at residue Tyr551. 3 consecutive transmembrane segments (beta stranded) span residues Thr558–Ala572, Ile585–Val596, and Ala602–Phe614. The TonB C-terminal box motif lies at Tyr597–Phe614.

It belongs to the TonB-dependent receptor family. BtuB (TC 1.B.14.3.1) subfamily.

Its subcellular location is the cell outer membrane. Involved in the active translocation of vitamin B12 (cyanocobalamin) across the outer membrane to the periplasmic space. It derives its energy for transport by interacting with the trans-periplasmic membrane protein TonB. The chain is Vitamin B12 transporter BtuB from Escherichia coli O1:K1 / APEC.